We begin with the raw amino-acid sequence, 380 residues long: Shedu protein SduA (380 aa).

Functionally, only component of antiviral defense system Shedu. Expression of Shedu in B.subtilis (strain BEST7003) confers resistance to phages phi105, phi29, rho14 and to a lesser extent to SPP1. May be an endonuclease. The sequence is that of Shedu protein SduA from Bacillus cereus (strain B4264).